We begin with the raw amino-acid sequence, 141 residues long: Large ribosomal subunit protein uL16 (141 aa).

It belongs to the universal ribosomal protein uL16 family. In terms of assembly, part of the 50S ribosomal subunit.

Functionally, binds 23S rRNA and is also seen to make contacts with the A and possibly P site tRNAs. This is Large ribosomal subunit protein uL16 from Aliarcobacter butzleri (strain RM4018) (Arcobacter butzleri).